A 472-amino-acid chain; its full sequence is UDP-glucuronosyltransferase (472 aa).

N-linked (GlcNAc...) asparagine glycosylation is found at N59, N227, and N377. A helical transmembrane segment spans residues 436 to 456 (FGFILLILLTVLWVTLKCCLF).

It belongs to the UDP-glycosyltransferase family.

The protein localises to the microsome membrane. The protein resides in the endoplasmic reticulum membrane. The catalysed reaction is glucuronate acceptor + UDP-alpha-D-glucuronate = acceptor beta-D-glucuronoside + UDP + H(+). In terms of biological role, UDPGT is of major importance in the conjugation and subsequent elimination of potentially toxic xenobiotics and endogenous compounds. In Pleuronectes platessa (European plaice), this protein is UDP-glucuronosyltransferase (ugt3).